A 59-amino-acid chain; its full sequence is Photosystem II reaction center protein K (59 aa).

Positions 1–22 (MLNIFSLICLNSALHSSSFFFA) are excised as a propeptide. The chain crosses the membrane as a helical span at residues 38 to 58 (MPVIPVLFFLLALVWQAAVSF).

This sequence belongs to the PsbK family. In terms of assembly, PSII is composed of 1 copy each of membrane proteins PsbA, PsbB, PsbC, PsbD, PsbE, PsbF, PsbH, PsbI, PsbJ, PsbK, PsbL, PsbM, PsbT, PsbX, PsbY, PsbZ, Psb30/Ycf12, at least 3 peripheral proteins of the oxygen-evolving complex and a large number of cofactors. It forms dimeric complexes.

The protein resides in the plastid. The protein localises to the chloroplast thylakoid membrane. Its function is as follows. One of the components of the core complex of photosystem II (PSII). PSII is a light-driven water:plastoquinone oxidoreductase that uses light energy to abstract electrons from H(2)O, generating O(2) and a proton gradient subsequently used for ATP formation. It consists of a core antenna complex that captures photons, and an electron transfer chain that converts photonic excitation into a charge separation. In Calycanthus floridus var. glaucus (Eastern sweetshrub), this protein is Photosystem II reaction center protein K.